A 225-amino-acid polypeptide reads, in one-letter code: Shikimate kinase (225 aa).

An ATP-binding site is contributed by 27 to 32 (GAGKTT). A Mg(2+)-binding site is contributed by threonine 31. Substrate contacts are provided by aspartate 49, arginine 73, and glycine 95. Arginine 132 is an ATP binding site. Position 150 (arginine 150) interacts with substrate. The tract at residues 186 to 225 (GGSEPDEAADAAGGSEPDEAADAAGGSEPDEAADAAGGKR) is disordered.

This sequence belongs to the shikimate kinase family. Monomer. The cofactor is Mg(2+).

It is found in the cytoplasm. The catalysed reaction is shikimate + ATP = 3-phosphoshikimate + ADP + H(+). Its pathway is metabolic intermediate biosynthesis; chorismate biosynthesis; chorismate from D-erythrose 4-phosphate and phosphoenolpyruvate: step 5/7. Its function is as follows. Catalyzes the specific phosphorylation of the 3-hydroxyl group of shikimic acid using ATP as a cosubstrate. This Frankia casuarinae (strain DSM 45818 / CECT 9043 / HFP020203 / CcI3) protein is Shikimate kinase.